We begin with the raw amino-acid sequence, 457 residues long: MMGDLTTSFPATTLTTNDQPHVVVCSGAGMGHLTPFLNLASALSSAPYNCKVTLLIVIPLITDAESHHISSFFSSHPTIHRLDFHVNLPAPKPNVDPFFLRYKSISDSAHRLPVHLSALSPPISAVFSDFLFTQGLNTTLPHLPNYTFTTTSARFFTLMSYVPHLAKSSSSSPVEIPGLEPFPTDNIPPPFFNPEHIFTSFTISNAKYFSLSKGILVNTFDSFEPETLSALNSGDTLSDLPPVIPIGPLNELEHNKQEELLPWLDQQPEKSVLYVSFGNRTAMSSDQILELGMGLERSDCRFIWVVKTSKIDKDDKSELRKLFGEELYLKLSEKGKLVKWVNQTEILGHTAVGGFLSHCGWNSVMEAARRGVPILAWPQHGDQRENAWVVEKAGLGVWEREWASGIQAAIVEKVKMIMGNNDLRKSAMKVGEEAKRACDVGGSSATALMNIIGSLKR.

G31 serves as a coordination point for UDP-alpha-D-glucose. H32 (proton acceptor) is an active-site residue. H32 provides a ligand contact to an anthocyanidin. T34 provides a ligand contact to UDP-alpha-D-glucose. N94 is an an anthocyanidin binding site. The active-site Charge relay is D129. T150 provides a ligand contact to UDP-alpha-D-glucose. The interval 279–280 (NR) is UDP. V341, Q343, H358, W361, N362, S363, and E366 together coordinate UDP-alpha-D-glucose. G381 contacts an anthocyanidin. The UDP-alpha-D-glucose site is built by D382 and Q383.

The protein belongs to the UDP-glycosyltransferase family. As to expression, expressed in cotyledons. Not detected in flowers, leaves, roots and hypocotyls.

It carries out the reaction a 3'-hydro-2'-hydroxy-beta-oxodihydrochalcone + UDP-alpha-D-glucose = a 3'-(beta-D-glucopyranosyl)-2'-hydroxy-beta-oxodihydrochalcone + UDP + H(+). UDP-glucose-dependent glucosyltransferase catalyzing the C-glucosylation of 2-hydroxyflavanones (2-hydroxynaringenin, 2-hydroxyeriodictyol and 2-hydroxypinocembrin) and phloretin. No activity with flavanones, flavones or flavonols. Exhibits C-glycosylation activity toward 2',4',6'-trihydroxyacetophenone and phloretin using UDP-glucose as sugar donor. Can use UDP-galactose as sugar donor, but catalytic efficiency is 14-fold lower toward UDP-galactose than toward UDP-glucose. In Fagopyrum esculentum (Common buckwheat), this protein is UDP-glycosyltransferase 708C1.